We begin with the raw amino-acid sequence, 440 residues long: MFLAQEIIRKKRDGHTLSDEEIRFFINGIRDNTISEGQIAALAMTIFFHDMTMPERVSLTMAMRDSGTVLDWKNLNLNGPIVDKHSTGGVGDVTSLMLGPMVAACGGYVPMISGRGLGHTGGTLDKLEAIPGFDIFPDDNRFRDIIQDVGVAIIGQTNSLAPADKRFYATRDITATVDSIPLITGSILAKKLAEGLDALVMDVKVGSGAFMPTYELSEALAEAIVGVANGAGVRTTALLTDMNQVLASSAGNALEVREAVQFLTGEYRNPRLFDVTMALCIEMLISGQLAKDDAQARAKLQAVLDNGKAAEVFGRMVAAQKGPTDFVENYDKYLPAAMLSKAVYADTEGFVSAMDTRALGMAVVSMGGGRRQASDTIDYSVGFTDMVRLGDSVDGQRPLAVIHAKDEANWQEAAKAVKAAIILDDKAPASTPSIYRRITE.

It belongs to the thymidine/pyrimidine-nucleoside phosphorylase family. Homodimer.

The enzyme catalyses thymidine + phosphate = 2-deoxy-alpha-D-ribose 1-phosphate + thymine. It functions in the pathway pyrimidine metabolism; dTMP biosynthesis via salvage pathway; dTMP from thymine: step 1/2. In terms of biological role, the enzymes which catalyze the reversible phosphorolysis of pyrimidine nucleosides are involved in the degradation of these compounds and in their utilization as carbon and energy sources, or in the rescue of pyrimidine bases for nucleotide synthesis. The chain is Thymidine phosphorylase from Salmonella arizonae (strain ATCC BAA-731 / CDC346-86 / RSK2980).